A 252-amino-acid chain; its full sequence is tRNA (guanine-N(1)-)-methyltransferase (252 aa).

Residues glycine 110 and 130–135 (VGDFVL) each bind S-adenosyl-L-methionine.

Belongs to the RNA methyltransferase TrmD family. Homodimer.

The protein resides in the cytoplasm. The enzyme catalyses guanosine(37) in tRNA + S-adenosyl-L-methionine = N(1)-methylguanosine(37) in tRNA + S-adenosyl-L-homocysteine + H(+). Its function is as follows. Specifically methylates guanosine-37 in various tRNAs. The chain is tRNA (guanine-N(1)-)-methyltransferase from Magnetococcus marinus (strain ATCC BAA-1437 / JCM 17883 / MC-1).